The primary structure comprises 1463 residues: Alpha-agarase (1463 aa).

The N-terminal stretch at 1 to 27 (MITSSKKIVSAMLSTSLWIGVASAAYA) is a signal peptide. A propeptide spanning residues 28-684 (ETTNVEAEGY…PSTLSESIFT (657 aa)) is cleaved from the precursor. Disordered regions lie at residues 166–191 (VTPE…PGTP) and 512–549 (TDDI…PQPG). Polar residues predominate over residues 518 to 536 (CANTPSGETANATGCSSSQ). In terms of domain architecture, PA14 spans 534 to 677 (SSQEGGGTDP…GGTNFVHPST (144 aa)). The region spanning 701–832 (IIVELESFVF…QWSGDRVRFT (132 aa)) is the CBM6 domain.

Belongs to the glycosyl hydrolase 96 family. As to quaternary structure, monomer. The cofactor is Ca(2+).

It carries out the reaction Endohydrolysis of 1,3-alpha-L-galactosidic linkages in agarose, yielding agarotetraose as the major product.. Alpha-agarase. Hydrolyzes agarose, agarohexaose, neoagarohexaose and porphyran. Hydrolysis of porphyran by this enzyme improves its antioxidant activity. Does not hydrolyze kappa-carrageenan, iota-carrageenen or lambda-carrageenan. This is Alpha-agarase from Thalassotalea agarivorans (Thalassomonas agarivorans).